The sequence spans 244 residues: 3-oxoacyl-[acyl-carrier-protein] reductase FabG (244 aa).

Residues 12-15 (GANQ) and Thr-37 contribute to the NADP(+) site. Ca(2+) contacts are provided by Glu-50 and Gly-53. NADP(+) is bound by residues 59-60 (NL) and Asn-86. A substrate-binding site is contributed by Ser-138. A Ca(2+)-binding site is contributed by Asn-145. Tyr-151 functions as the Proton acceptor in the catalytic mechanism. NADP(+) is bound by residues 151-155 (YSASK) and Ile-184. Ca(2+) is bound at residue Thr-234.

This sequence belongs to the short-chain dehydrogenases/reductases (SDR) family. As to quaternary structure, homotetramer.

It catalyses the reaction a (3R)-hydroxyacyl-[ACP] + NADP(+) = a 3-oxoacyl-[ACP] + NADPH + H(+). It functions in the pathway lipid metabolism; fatty acid biosynthesis. In terms of biological role, catalyzes the NADPH-dependent reduction of beta-ketoacyl-ACP substrates to beta-hydroxyacyl-ACP products, the first reductive step in the elongation cycle of fatty acid biosynthesis. The polypeptide is 3-oxoacyl-[acyl-carrier-protein] reductase FabG (fabG) (Buchnera aphidicola subsp. Acyrthosiphon pisum (strain APS) (Acyrthosiphon pisum symbiotic bacterium)).